The sequence spans 314 residues: Putative SET domain-containing protein L222 (314 aa).

Positions 23–172 (EYIQVIYQNP…ANTEITISYG (150 aa)) constitute an SET domain.

The protein belongs to the class V-like SAM-binding methyltransferase superfamily.

The chain is Putative SET domain-containing protein L222 from Acanthamoeba polyphaga mimivirus (APMV).